We begin with the raw amino-acid sequence, 2311 residues long: Protein Ycf2 (2311 aa).

1652 to 1659 is a binding site for ATP; sequence GSIGTGRS.

Belongs to the Ycf2 family.

The protein localises to the plastid. It localises to the chloroplast stroma. In terms of biological role, probable ATPase of unknown function. Its presence in a non-photosynthetic plant (Epifagus virginiana) and experiments in tobacco indicate that it has an essential function which is probably not related to photosynthesis. The protein is Protein Ycf2 of Lemna minor (Common duckweed).